The primary structure comprises 427 residues: Adenylosuccinate synthetase (427 aa).

GTP-binding positions include 12 to 18 and 40 to 42; these read GDEGKGK and GHT. Catalysis depends on Asp13, which acts as the Proton acceptor. Residues Asp13 and Gly40 each contribute to the Mg(2+) site. IMP-binding positions include 13–16, 38–41, Thr128, Arg142, Gln223, Thr238, and Arg302; these read DEGK and NAGH. His41 serves as the catalytic Proton donor. 298–304 provides a ligand contact to substrate; that stretch reads TTTGRPR. Residues Arg304, 330 to 332, and 412 to 414 each bind GTP; these read SID and SVG.

The protein belongs to the adenylosuccinate synthetase family. Homodimer. Mg(2+) is required as a cofactor.

It localises to the cytoplasm. It carries out the reaction IMP + L-aspartate + GTP = N(6)-(1,2-dicarboxyethyl)-AMP + GDP + phosphate + 2 H(+). The protein operates within purine metabolism; AMP biosynthesis via de novo pathway; AMP from IMP: step 1/2. In terms of biological role, plays an important role in the de novo pathway of purine nucleotide biosynthesis. Catalyzes the first committed step in the biosynthesis of AMP from IMP. This Staphylococcus aureus (strain N315) protein is Adenylosuccinate synthetase.